The chain runs to 190 residues: Putative protein p47 (190 aa).

The sequence is that of Putative protein p47 (47) from Escherichia coli (Bacteriophage APSE-1).